Reading from the N-terminus, the 352-residue chain is Potassium/proton antiporter CemA (352 aa).

Helical transmembrane passes span 52–72 (VLVSLQCLLTLIIIPLFIHFF), 227–247 (IAALTNLFADLLTLFSLIILF), and 312–332 (IILLFVATFPVLLDSVIKYWI).

Belongs to the CemA family.

It is found in the plastid. The protein resides in the chloroplast inner membrane. The catalysed reaction is K(+)(in) + H(+)(out) = K(+)(out) + H(+)(in). Its function is as follows. Contributes to K(+)/H(+) antiport activity by supporting proton efflux to control proton extrusion and homeostasis in chloroplasts in a light-dependent manner to modulate photosynthesis. Prevents excessive induction of non-photochemical quenching (NPQ) under continuous-light conditions. Indirectly promotes efficient inorganic carbon uptake into chloroplasts. This is Potassium/proton antiporter CemA from Oltmannsiellopsis viridis (Marine flagellate).